The chain runs to 214 residues: Thymidylate kinase (214 aa).

Residue 14–21 (GLEGAGKT) coordinates ATP.

The protein belongs to the thymidylate kinase family.

The catalysed reaction is dTMP + ATP = dTDP + ADP. Its function is as follows. Phosphorylation of dTMP to form dTDP in both de novo and salvage pathways of dTTP synthesis. The protein is Thymidylate kinase of Mannheimia succiniciproducens (strain KCTC 0769BP / MBEL55E).